Reading from the N-terminus, the 286-residue chain is Bifunctional protein FolD (286 aa).

NADP(+) is bound by residues 165–167 and S190; that span reads GRS.

It belongs to the tetrahydrofolate dehydrogenase/cyclohydrolase family. Homodimer.

The enzyme catalyses (6R)-5,10-methylene-5,6,7,8-tetrahydrofolate + NADP(+) = (6R)-5,10-methenyltetrahydrofolate + NADPH. The catalysed reaction is (6R)-5,10-methenyltetrahydrofolate + H2O = (6R)-10-formyltetrahydrofolate + H(+). The protein operates within one-carbon metabolism; tetrahydrofolate interconversion. In terms of biological role, catalyzes the oxidation of 5,10-methylenetetrahydrofolate to 5,10-methenyltetrahydrofolate and then the hydrolysis of 5,10-methenyltetrahydrofolate to 10-formyltetrahydrofolate. This chain is Bifunctional protein FolD, found in Staphylococcus epidermidis (strain ATCC 35984 / DSM 28319 / BCRC 17069 / CCUG 31568 / BM 3577 / RP62A).